A 289-amino-acid polypeptide reads, in one-letter code: MACVDEPPEKHCWVCFATEKEDRAAEWVSPCRCKGCTKWIHQSCLQRWLDEKQKGNSGGAVSCPQCGTEYRIVFPKMGPVVYFLQQVDRALSRASPFAAAGVVVGTVYWSAVTYGAVTVMQVVGHKKGLDVMERADPLFLLMGLPTIPVMLVLGKMIRWEDYVVRLWQRHSAKLQIFSGLVPGMGRALPRVPVEGSYGGDHLSVSRTLCGALIFPSIANLVGRLLFRRVTSNLQRTILGGIAFVVMKGVLKVYFKQQQYLIQANRHILNYPEPEGQADGATEDEDSSNE.

The segment at 4–73 (VDEPPEKHCW…PQCGTEYRIV (70 aa)) adopts an RING-CH-type zinc-finger fold. 8 residues coordinate Zn(2+): Cys12, Cys15, Cys31, Cys33, His41, Cys44, Cys63, and Cys66. Helical transmembrane passes span 97 to 117 (FAAA…YGAV), 137 to 157 (PLFL…GKMI), 202 to 222 (LSVS…NLVG), and 236 to 256 (TILG…YFKQ).

It is found in the mitochondrion outer membrane. It localises to the endoplasmic reticulum membrane. It catalyses the reaction S-ubiquitinyl-[E2 ubiquitin-conjugating enzyme]-L-cysteine + [acceptor protein]-L-lysine = [E2 ubiquitin-conjugating enzyme]-L-cysteine + N(6)-ubiquitinyl-[acceptor protein]-L-lysine.. It participates in protein modification; protein ubiquitination. Mitochondrial E3 ubiquitin-protein ligase that plays a crucial role in the control of mitochondrial morphology by acting as a positive regulator of mitochondrial fission. May play a role in the prevention of cell senescence acting as a regulator of mitochondrial quality control. The chain is E3 ubiquitin-protein ligase MARCHF5 (marchf5) from Danio rerio (Zebrafish).